A 383-amino-acid chain; its full sequence is Succinyl-diaminopimelate desuccinylase (383 aa).

Position 69 (His-69) interacts with Zn(2+). Asp-71 is a catalytic residue. A Zn(2+)-binding site is contributed by Asp-103. Glu-137 serves as the catalytic Proton acceptor. 3 residues coordinate Zn(2+): Glu-138, Glu-166, and His-357.

Belongs to the peptidase M20A family. DapE subfamily. As to quaternary structure, homodimer. Zn(2+) is required as a cofactor. Co(2+) serves as cofactor.

It carries out the reaction N-succinyl-(2S,6S)-2,6-diaminopimelate + H2O = (2S,6S)-2,6-diaminopimelate + succinate. It functions in the pathway amino-acid biosynthesis; L-lysine biosynthesis via DAP pathway; LL-2,6-diaminopimelate from (S)-tetrahydrodipicolinate (succinylase route): step 3/3. Its function is as follows. Catalyzes the hydrolysis of N-succinyl-L,L-diaminopimelic acid (SDAP), forming succinate and LL-2,6-diaminopimelate (DAP), an intermediate involved in the bacterial biosynthesis of lysine and meso-diaminopimelic acid, an essential component of bacterial cell walls. This is Succinyl-diaminopimelate desuccinylase from Rickettsia prowazekii (strain Madrid E).